The chain runs to 334 residues: NmrA-like family domain-containing oxidoreductase lnaB (334 aa).

Residues 12-17 (GGTGKQ), 38-42 (RNAQS), 59-60 (DG), 80-82 (INS), Lys-138, and 162-165 (FLEN) each bind NADP(+).

The protein belongs to the NmrA-type oxidoreductase family.

It functions in the pathway secondary metabolite biosynthesis. Functionally, nmrA-like family domain-containing oxidoreductase; part of the lna gene cluster that mediates the biosynthesis of diastereomeric piperazines. Lna and lnb clusters encode sets of enzymes that produce overlapping sets of previously undescribed metabolites such as piperazinomycin-like metabolites or morpholine. The lna and lnb biosynthetic pathways appear to be part of a signaling network that controls the formation of sclerotia, a resilient overwintering structure. One primary function of the non-canonical nonribosomal peptide synthetases lnaA and lnbA consists in the reduction of L-tyrosine. The presence in the clusters of tailoring enzymes such as the oxidoreductases lnaB, lnbB, lnaE or lnbE, as well as of the cytochrome P450 monooxygenases lnaC, lnaD, or lnbC, might explain formation of various diastereomeric piperazines. The sequence is that of NmrA-like family domain-containing oxidoreductase lnaB from Aspergillus flavus (strain ATCC 200026 / FGSC A1120 / IAM 13836 / NRRL 3357 / JCM 12722 / SRRC 167).